A 564-amino-acid chain; its full sequence is Dihydropyrimidinase-related protein 5 (564 aa).

A phosphothreonine mark is found at Thr509 and Thr514. Residues Ser532 and Ser538 each carry the phosphoserine modification. An Omega-N-methylarginine modification is found at Arg559.

It belongs to the metallo-dependent hydrolases superfamily. Hydantoinase/dihydropyrimidinase family. As to quaternary structure, homotetramer, and heterotetramer with other DPYS-like proteins. Interacts with DPYSL2, DPYSL3 and DPYSL4. Interacts with MAP2 and TUBB3.

It localises to the cytoplasm. Involved in the negative regulation of dendrite outgrowth. The chain is Dihydropyrimidinase-related protein 5 (DPYSL5) from Homo sapiens (Human).